The sequence spans 178 residues: Cytochrome c-type biogenesis protein CcmE (178 aa).

The Cytoplasmic segment spans residues 1-8 (MNPRRKKR). The helical; Signal-anchor for type II membrane protein transmembrane segment at 9–29 (LAIVGSILIGIGVVSGLVLYA) threads the bilayer. Topologically, residues 30–178 (LSQNIDLFFT…QLESKKTNSY (149 aa)) are periplasmic. Residues H143 and Y147 each coordinate heme. Residues 154 to 178 (EAAGQKHDKATYSDKQLESKKTNSY) are disordered. Over residues 157 to 178 (GQKHDKATYSDKQLESKKTNSY) the composition is skewed to basic and acidic residues.

This sequence belongs to the CcmE/CycJ family.

Its subcellular location is the cell inner membrane. Functionally, heme chaperone required for the biogenesis of c-type cytochromes. Transiently binds heme delivered by CcmC and transfers the heme to apo-cytochromes in a process facilitated by CcmF and CcmH. The sequence is that of Cytochrome c-type biogenesis protein CcmE from Colwellia psychrerythraea (strain 34H / ATCC BAA-681) (Vibrio psychroerythus).